The sequence spans 65 residues: Large ribosomal subunit protein bL35 (65 aa).

Residues 1 to 26 are disordered; sequence MPKIKTVRGAAKRFKKTASGGFKRKQ. Residues 10–26 show a composition bias toward basic residues; the sequence is AAKRFKKTASGGFKRKQ.

This sequence belongs to the bacterial ribosomal protein bL35 family.

The chain is Large ribosomal subunit protein bL35 from Mannheimia succiniciproducens (strain KCTC 0769BP / MBEL55E).